Reading from the N-terminus, the 367-residue chain is UDP-N-acetylenolpyruvoylglucosamine reductase 2 (367 aa).

The FAD-binding PCMH-type domain maps to I31–D198. R176 is an active-site residue. S256 (proton donor) is an active-site residue. The active site involves E357.

It belongs to the MurB family. Requires FAD as cofactor.

It is found in the cytoplasm. The enzyme catalyses UDP-N-acetyl-alpha-D-muramate + NADP(+) = UDP-N-acetyl-3-O-(1-carboxyvinyl)-alpha-D-glucosamine + NADPH + H(+). Its pathway is cell wall biogenesis; peptidoglycan biosynthesis. In terms of biological role, cell wall formation. The sequence is that of UDP-N-acetylenolpyruvoylglucosamine reductase 2 (murB2) from Corynebacterium glutamicum (strain ATCC 13032 / DSM 20300 / JCM 1318 / BCRC 11384 / CCUG 27702 / LMG 3730 / NBRC 12168 / NCIMB 10025 / NRRL B-2784 / 534).